A 500-amino-acid chain; its full sequence is Probable malate:quinone oxidoreductase (500 aa).

It belongs to the MQO family. The cofactor is FAD.

It carries out the reaction (S)-malate + a quinone = a quinol + oxaloacetate. The protein operates within carbohydrate metabolism; tricarboxylic acid cycle; oxaloacetate from (S)-malate (quinone route): step 1/1. This Halalkalibacterium halodurans (strain ATCC BAA-125 / DSM 18197 / FERM 7344 / JCM 9153 / C-125) (Bacillus halodurans) protein is Probable malate:quinone oxidoreductase.